The primary structure comprises 89 residues: Large ribosomal subunit protein bL27 (89 aa).

Residues 1-24 are disordered; sequence MAHKKGTGSTRNGRDSRSQRLGVK.

This sequence belongs to the bacterial ribosomal protein bL27 family.

This chain is Large ribosomal subunit protein bL27, found in Microcystis aeruginosa (strain NIES-843 / IAM M-2473).